A 207-amino-acid chain; its full sequence is Large ribosomal subunit protein uL4 (207 aa).

Belongs to the universal ribosomal protein uL4 family. As to quaternary structure, part of the 50S ribosomal subunit.

In terms of biological role, one of the primary rRNA binding proteins, this protein initially binds near the 5'-end of the 23S rRNA. It is important during the early stages of 50S assembly. It makes multiple contacts with different domains of the 23S rRNA in the assembled 50S subunit and ribosome. Forms part of the polypeptide exit tunnel. The sequence is that of Large ribosomal subunit protein uL4 from Rickettsia africae (strain ESF-5).